The chain runs to 418 residues: ATP phosphoribosyltransferase regulatory subunit (418 aa).

This sequence belongs to the class-II aminoacyl-tRNA synthetase family. HisZ subfamily. In terms of assembly, heteromultimer composed of HisG and HisZ subunits.

Its subcellular location is the cytoplasm. The protein operates within amino-acid biosynthesis; L-histidine biosynthesis; L-histidine from 5-phospho-alpha-D-ribose 1-diphosphate: step 1/9. Required for the first step of histidine biosynthesis. May allow the feedback regulation of ATP phosphoribosyltransferase activity by histidine. This chain is ATP phosphoribosyltransferase regulatory subunit, found in Halothermothrix orenii (strain H 168 / OCM 544 / DSM 9562).